Consider the following 930-residue polypeptide: Translation initiation factor IF-2 (930 aa).

Over residues 50–67 the composition is skewed to low complexity; sequence FKPAAAPKVEAKPAAPKV. Disordered stretches follow at residues 50–195 and 260–346; these read FKPA…PRID and EVVP…HELP. Composition is skewed to basic and acidic residues over residues 68 to 90 and 110 to 125; these read SAEK…EAKP and FKAE…AERR. A compositionally biased stretch (low complexity) spans 129–141; sequence KGNNRDQQQNGNR. Composition is skewed to basic and acidic residues over residues 157-167 and 262-295; these read RDNRRFNDQAK and VPEK…DGPR. Residues 309–318 are compositionally biased toward low complexity; that stretch reads NQKNSNWNNN. Residues 337–346 show a composition bias toward basic and acidic residues; it reads VTERKFHELP. The tr-type G domain maps to 432 to 599; it reads ERPPVVTIMG…TVLLVAEIQE (168 aa). A G1 region spans residues 441-448; sequence GHVDHGKT. 441–448 lines the GTP pocket; the sequence is GHVDHGKT. Residues 466–470 are G2; the sequence is GITQH. The segment at 487–490 is G3; the sequence is DTPG. GTP is bound by residues 487-491 and 541-544; these read DTPGH and NKID. The segment at 541–544 is G4; sequence NKID. Residues 577–579 form a G5 region; that stretch reads SAK.

Belongs to the TRAFAC class translation factor GTPase superfamily. Classic translation factor GTPase family. IF-2 subfamily.

It is found in the cytoplasm. Functionally, one of the essential components for the initiation of protein synthesis. Protects formylmethionyl-tRNA from spontaneous hydrolysis and promotes its binding to the 30S ribosomal subunits. Also involved in the hydrolysis of GTP during the formation of the 70S ribosomal complex. This chain is Translation initiation factor IF-2, found in Streptococcus pneumoniae (strain Hungary19A-6).